Consider the following 164-residue polypeptide: MKEIKLILTDIDGVWTDGGMFYDQTGNEWKKFNTSDSAGIFWAHNKGIPVGILTGEKTEIVRRRAEKLKVDYLFQGVVDKLSAAEELCNELGINLEQVAYIGDDLNDAKLLKRVGIAGVPASAPFYIRRLSTIFLEKRGGEGVFREFVEKVLGINLEDFIAVIQ.

Mg(2+)-binding residues include aspartate 10 and aspartate 12. Residues threonine 34, 54–56 (TGE), 64–67 (RAEK), and lysine 80 each bind substrate. Aspartate 103 contributes to the Mg(2+) binding site. Asparagine 106 serves as a coordination point for substrate.

The protein belongs to the KdsC family. In terms of assembly, homotetramer. Mg(2+) is required as a cofactor.

The enzyme catalyses 3-deoxy-D-glycero-beta-D-galacto-non-2-ulopyranosonate 9-phosphate + H2O = 3-deoxy-D-glycero-beta-D-galacto-non-2-ulopyranosonate + phosphate. Involved in the biosynthesis of 2-keto-3-deoxy-D-glycero-D-galacto-nononic acid used in cell-wall polysaccharides. Catalyzes the hydrolysis of 2-keto-3-deoxy-D-glycero-D-galacto-9-phosphonononic acid (KDN-9-P) to yield 2-keto-3-deoxy-D-glycero-D-galacto-nononic acid (KDN). Also able to hydrolyze N-acetylneuraminate-9-phosphate (Neu5NAc-9-P), 2-keto-3-deoxy-D-manno-octulosonate-8-phosphate (KDO-8-P), phosphoenolpyruvate (PEP), gluconate 6-phosphate, tyrosine phosphate ester and glucose-6-P as substrate. The polypeptide is 2-keto-3-deoxy-D-glycero-D-galacto-9-phosphonononic acid phosphatase (Bacteroides thetaiotaomicron (strain ATCC 29148 / DSM 2079 / JCM 5827 / CCUG 10774 / NCTC 10582 / VPI-5482 / E50)).